The primary structure comprises 380 residues: Glucose-1-phosphate adenylyltransferase (380 aa).

Residues Gly164, 179-180 (EK), and Ser190 contribute to the alpha-D-glucose 1-phosphate site.

This sequence belongs to the bacterial/plant glucose-1-phosphate adenylyltransferase family. Homotetramer.

The catalysed reaction is alpha-D-glucose 1-phosphate + ATP + H(+) = ADP-alpha-D-glucose + diphosphate. It participates in glycan biosynthesis; glycogen biosynthesis. Functionally, involved in the biosynthesis of ADP-glucose, a building block required for the elongation reactions to produce glycogen. Catalyzes the reaction between ATP and alpha-D-glucose 1-phosphate (G1P) to produce pyrophosphate and ADP-Glc. This chain is Glucose-1-phosphate adenylyltransferase, found in Lactococcus lactis subsp. lactis (strain IL1403) (Streptococcus lactis).